Consider the following 20-residue polypeptide: Short cationic peptide-4c (20 aa).

E20 carries the glutamic acid 1-amide modification.

In terms of tissue distribution, expressed by the venom gland.

It is found in the secreted. The polypeptide is Short cationic peptide-4c (Cupiennius salei (American wandering spider)).